The sequence spans 374 residues: UDP-N-acetylglucosamine--N-acetylmuramyl-(pentapeptide) pyrophosphoryl-undecaprenol N-acetylglucosamine transferase (374 aa).

Residues 13 to 15 (TGG), N124, R165, S193, and Q294 each bind UDP-N-acetyl-alpha-D-glucosamine.

This sequence belongs to the glycosyltransferase 28 family. MurG subfamily.

It localises to the cell inner membrane. It catalyses the reaction di-trans,octa-cis-undecaprenyl diphospho-N-acetyl-alpha-D-muramoyl-L-alanyl-D-glutamyl-meso-2,6-diaminopimeloyl-D-alanyl-D-alanine + UDP-N-acetyl-alpha-D-glucosamine = di-trans,octa-cis-undecaprenyl diphospho-[N-acetyl-alpha-D-glucosaminyl-(1-&gt;4)]-N-acetyl-alpha-D-muramoyl-L-alanyl-D-glutamyl-meso-2,6-diaminopimeloyl-D-alanyl-D-alanine + UDP + H(+). It participates in cell wall biogenesis; peptidoglycan biosynthesis. In terms of biological role, cell wall formation. Catalyzes the transfer of a GlcNAc subunit on undecaprenyl-pyrophosphoryl-MurNAc-pentapeptide (lipid intermediate I) to form undecaprenyl-pyrophosphoryl-MurNAc-(pentapeptide)GlcNAc (lipid intermediate II). The sequence is that of UDP-N-acetylglucosamine--N-acetylmuramyl-(pentapeptide) pyrophosphoryl-undecaprenol N-acetylglucosamine transferase from Rhizobium rhizogenes (strain K84 / ATCC BAA-868) (Agrobacterium radiobacter).